We begin with the raw amino-acid sequence, 747 residues long: Catalase-peroxidase (747 aa).

The N-terminal stretch at 1–27 (MRKFSVSKVALLAATMAPALLPAAARA) is a signal peptide. Positions 116–238 (WHSAGTYRTA…LAAVQMGLIY (123 aa)) form a cross-link, tryptophyl-tyrosyl-methioninium (Trp-Tyr) (with M-264). His-117 serves as the catalytic Proton acceptor. Residues 238–264 (YVNPEGPNGNPDPLLAAKDIRETFGRM) constitute a cross-link (tryptophyl-tyrosyl-methioninium (Tyr-Met) (with W-116)). A heme b-binding site is contributed by His-279.

Belongs to the peroxidase family. Peroxidase/catalase subfamily. Homodimer or homotetramer. The cofactor is heme b. In terms of processing, formation of the three residue Trp-Tyr-Met cross-link is important for the catalase, but not the peroxidase activity of the enzyme.

The enzyme catalyses H2O2 + AH2 = A + 2 H2O. The catalysed reaction is 2 H2O2 = O2 + 2 H2O. Its function is as follows. Bifunctional enzyme with both catalase and broad-spectrum peroxidase activity. The polypeptide is Catalase-peroxidase (Novosphingobium aromaticivorans (strain ATCC 700278 / DSM 12444 / CCUG 56034 / CIP 105152 / NBRC 16084 / F199)).